We begin with the raw amino-acid sequence, 132 residues long: Small ribosomal subunit protein uS8 (132 aa).

This sequence belongs to the universal ribosomal protein uS8 family. As to quaternary structure, part of the 30S ribosomal subunit. Contacts proteins S5 and S12.

One of the primary rRNA binding proteins, it binds directly to 16S rRNA central domain where it helps coordinate assembly of the platform of the 30S subunit. This is Small ribosomal subunit protein uS8 from Leuconostoc citreum (strain KM20).